We begin with the raw amino-acid sequence, 361 residues long: L-threonine 3-dehydrogenase (361 aa).

Cysteine 38 contributes to the Zn(2+) binding site. Active-site charge relay system residues include threonine 40 and histidine 43. Residues histidine 63, glutamate 64, cysteine 93, cysteine 96, cysteine 99, and cysteine 107 each coordinate Zn(2+). Residues isoleucine 175, aspartate 195, arginine 200, 262-264 (LGI), and 286-287 (IY) contribute to the NAD(+) site.

The protein belongs to the zinc-containing alcohol dehydrogenase family. Homotetramer. Requires Zn(2+) as cofactor.

The protein resides in the cytoplasm. The catalysed reaction is L-threonine + NAD(+) = (2S)-2-amino-3-oxobutanoate + NADH + H(+). It participates in amino-acid degradation; L-threonine degradation via oxydo-reductase pathway; glycine from L-threonine: step 1/2. In terms of biological role, catalyzes the NAD(+)-dependent oxidation of L-threonine to 2-amino-3-ketobutyrate. This chain is L-threonine 3-dehydrogenase, found in Pectobacterium atrosepticum (strain SCRI 1043 / ATCC BAA-672) (Erwinia carotovora subsp. atroseptica).